A 378-amino-acid chain; its full sequence is WUSCHEL-related homeobox 9 (378 aa).

Disordered stretches follow at residues 1 to 60 (MASS…NPKP) and 123 to 173 (KHSL…GSQM). The span at 32–42 (SASHRSSPFSS) shows a compositional bias: low complexity. A compositionally biased stretch (basic and acidic residues) spans 45-54 (EVERSPEPKP). A DNA-binding region (homeobox; WUS-type) is located at residues 51–115 (EPKPRWNPKP…NRKSRSKHKL (65 aa)). Composition is skewed to low complexity over residues 137-152 (PSAS…SSKS) and 161-171 (KNNTNLSLGGS).

This sequence belongs to the WUS homeobox family. As to expression, expressed in the basal cell and later at the boundary between suspensor and proembryo. Expressed at low levels in proliferating tissues post embryonically. Detected in vegetative shoot apical meristem, leaf primordia, floral meristems, emerging floral organs, epidermal layer of the placenta and in the upper portion of the root meristematic zone.

The protein localises to the nucleus. It is found in the cytoplasm. Functionally, homeodomain transcription factor required for meristem growth and early development. Promotes cell proliferation and prevents premature differentiation in meristematic tissues during postembryonic development. Essential for maintaining tissue growth during embryogenesis. May act by repressing TSS to promote meristematic proliferation. Involved in the transcriptional activation of a subset of cytokinin response factors. May act as a negative regulator of cytokinin signaling in the dark. This chain is WUSCHEL-related homeobox 9, found in Arabidopsis thaliana (Mouse-ear cress).